We begin with the raw amino-acid sequence, 418 residues long: Histidine--tRNA ligase (418 aa).

The protein belongs to the class-II aminoacyl-tRNA synthetase family. Homodimer.

It localises to the cytoplasm. The enzyme catalyses tRNA(His) + L-histidine + ATP = L-histidyl-tRNA(His) + AMP + diphosphate + H(+). This Dehalococcoides mccartyi (strain ATCC BAA-2266 / KCTC 15142 / 195) (Dehalococcoides ethenogenes (strain 195)) protein is Histidine--tRNA ligase.